Here is a 111-residue protein sequence, read N- to C-terminus: Cell cycle protein GpsB (111 aa).

Positions 38-72 form a coiled coil; the sequence is IKDYEAFHKEFEQLKQQNARLKRELEEQKLAATQV.

This sequence belongs to the GpsB family. As to quaternary structure, forms polymers through the coiled coil domains. Interacts with PBP1, MreC and EzrA.

The protein resides in the cytoplasm. In terms of biological role, divisome component that associates with the complex late in its assembly, after the Z-ring is formed, and is dependent on DivIC and PBP2B for its recruitment to the divisome. Together with EzrA, is a key component of the system that regulates PBP1 localization during cell cycle progression. Its main role could be the removal of PBP1 from the cell pole after pole maturation is completed. Also contributes to the recruitment of PBP1 to the division complex. Not essential for septum formation. This is Cell cycle protein GpsB from Bacillus cereus (strain ATCC 10987 / NRS 248).